A 986-amino-acid polypeptide reads, in one-letter code: DNA polymerase I (986 aa).

A 5'-3' exonuclease domain is found at 1–303 (MFMSAKSPLL…RTFIDKIQAF (303 aa)). In terms of domain architecture, 3'-5' exonuclease spans 304-592 (HRNFSDNQSP…MEDRGIRIDC (289 aa)). Positions 308–327 (SDNQSPVPMGNEADNGEPKK) are disordered. The tract at residues 593-986 (DYLQTLSQQL…HRGSNWMEAK (394 aa)) is polymerase.

Belongs to the DNA polymerase type-A family. As to quaternary structure, single-chain monomer with multiple functions.

It carries out the reaction DNA(n) + a 2'-deoxyribonucleoside 5'-triphosphate = DNA(n+1) + diphosphate. In terms of biological role, in addition to polymerase activity, this DNA polymerase exhibits 3'-5' and 5'-3' exonuclease activity. The sequence is that of DNA polymerase I (polA) from Synechocystis sp. (strain ATCC 27184 / PCC 6803 / Kazusa).